The following is a 734-amino-acid chain: Rho GTPase-activating protein gacL (734 aa).

Residues 141–339 enclose the Rho-GAP domain; that stretch reads ISLDTLIAKE…QMILHYDTLF (199 aa). WD repeat units lie at residues 381–430, 539–579, and 585–623; these read GHNK…FIKE, LFMK…TIHQ, and KRPK…LEHK.

The protein localises to the cytoplasm. Its function is as follows. Rho GTPase-activating protein involved in the signal transduction pathway. The protein is Rho GTPase-activating protein gacL (gacL) of Dictyostelium discoideum (Social amoeba).